Here is a 361-residue protein sequence, read N- to C-terminus: Alternative oxidase, mitochondrial (361 aa).

Residues 156–178 traverse the membrane as a helical segment; it reads YLVRNVFLESVAGVPGMVAGMLR. E164, E203, and H206 together coordinate Fe cation. A helical transmembrane segment spans residues 218–240; sequence WFMRLAVLGAQGVFFNAMFLSYL. E254, E309, and H312 together coordinate Fe cation. A compositionally biased stretch (polar residues) spans 318–328; it reads TLGNLDQNSDP. Residues 318 to 361 are disordered; that stretch reads TLGNLDQNSDPNPYASKYDNPNVPHPRKDIKYLKPSGWEREEVM. Residues 343–361 are compositionally biased toward basic and acidic residues; that stretch reads PRKDIKYLKPSGWEREEVM.

Belongs to the alternative oxidase family. The cofactor is Fe cation.

It localises to the mitochondrion inner membrane. Catalyzes cyanide-resistant oxygen consumption. May increase respiration when the cytochrome respiratory pathway is restricted, or in response to low temperatures. The chain is Alternative oxidase, mitochondrial (AOX1) from Venturia inaequalis (Apple scab fungus).